A 29-amino-acid chain; its full sequence is Cyclotide mobo-B (29 aa).

Positions Gly-1–Asn-29 form a cross-link, cyclopeptide (Gly-Asn). Cystine bridges form between Cys-5-Cys-19, Cys-9-Cys-21, and Cys-14-Cys-26.

The protein belongs to the cyclotide family. This is a cyclic peptide.

Its function is as follows. Probably participates in a plant defense mechanism. This chain is Cyclotide mobo-B, found in Melicytus obovatus (Hymenanthera obovata).